The primary structure comprises 634 residues: Chaperone protein dnaK2 (634 aa).

Position 197 is a phosphothreonine; by autocatalysis (Thr-197). The segment covering 601–620 (SAEASANAQAGPSSSSSSSS) has biased composition (low complexity). The interval 601–634 (SAEASANAQAGPSSSSSSSSGDDDVIDAEFSESK) is disordered. Residues 621–634 (GDDDVIDAEFSESK) are compositionally biased toward acidic residues.

This sequence belongs to the heat shock protein 70 family.

Its function is as follows. Acts as a chaperone. This Synechococcus elongatus (strain ATCC 33912 / PCC 7942 / FACHB-805) (Anacystis nidulans R2) protein is Chaperone protein dnaK2 (dnaK2).